Here is a 943-residue protein sequence, read N- to C-terminus: Sodium- and chloride-dependent GABA transporter ine (943 aa).

Residues 1–345 (MAENKDVSQV…RQQHWANKMQ (345 aa)) lie on the Cytoplasmic side of the membrane. Residues 103 to 122 (HKQSPLRHTSVRTRPSSEVL) form a disordered region. 3 helical membrane passes run 346–366 (FVLACIGYSVGLGNVWRFPYM), 373–393 (GVFLVPYCIILFICSIPLLFM), and 418–438 (GAGLASVVVSFLMSTYYSVII). Topologically, residues 439–510 (GYSIYYFFTS…GLEYPGMMRW (72 aa)) are extracellular. N476 carries an N-linked (GlcNAc...) asparagine glycan. The next 9 helical transmembrane spans lie at 511–531 (ELFACLICAWLMVYFATWKSI), 539–559 (YFTATFPFVLIIILMVRAVTL), 591–607 (FNSLGITFGSMISFASY), 618–638 (TVAVSAVNMITSLLVGIFAFS), 679–699 (WAVMFFFMLLCLGLNSQFAIV), 723–743 (IVVLFVCVISCLFGMPNIIQG), 754–774 (YAASVTIMFLAFCQMIAIAWF), 799–819 (CWLVLGPCLLFAIWVLSLINY), and 836–856 (YGIGWMFASFSLICIPGYAVI). Topologically, residues 857 to 943 (NFLRSSGDTF…HAEAGGPCGQ (87 aa)) are cytoplasmic.

Belongs to the sodium:neurotransmitter symporter (SNF) (TC 2.A.22) family. Expressed both maternally and zygotically. Developing embryos exhibit expression in the posterior hindgut, foregut, midgut, Malpighian tubules, anal plate, Garland cells, and a subset of cells in the central nervous system. Central nervous system expression is seen in segmentally repeating in cells flanking the midline of the ventral ganglion. Isoform A and isoform B are colocalized in both the nervous system and the fluid reabsorption system.

Its subcellular location is the membrane. In terms of biological role, plays a role in neuronal membrane excitation, important for normal response properties of the photoreceptor. Able to control excitability from either neurons or glia cells. Ine negatively regulates neuronal sodium channels. Controls neurotransmitter-mediated signaling pathways associated with the structure of the larval peripheral nerve, ine and eag control perineurial glial growth through partially redundant pathways. Isoform A and isoform B are both functional, although isoform A functions with greater efficiency. Has a role in osmolyte transport within the Malpighian tubule and hindgut. This Drosophila melanogaster (Fruit fly) protein is Sodium- and chloride-dependent GABA transporter ine.